A 257-amino-acid chain; its full sequence is Dihydroorotate dehydrogenase B (NAD(+)), electron transfer subunit (257 aa).

The 101-residue stretch at 2–102 (IGRERMTVAS…LGPLGNGFPL (101 aa)) folds into the FAD-binding FR-type domain. Residues 53–56 (RPLS), 70–72 (IYR), and 77–78 (GT) each bind FAD. [2Fe-2S] cluster contacts are provided by Cys-221, Cys-226, Cys-229, and Cys-244.

The protein belongs to the PyrK family. In terms of assembly, heterotetramer of 2 PyrK and 2 PyrD type B subunits. It depends on [2Fe-2S] cluster as a cofactor. FAD is required as a cofactor.

The protein operates within pyrimidine metabolism; UMP biosynthesis via de novo pathway; orotate from (S)-dihydroorotate (NAD(+) route): step 1/1. Responsible for channeling the electrons from the oxidation of dihydroorotate from the FMN redox center in the PyrD type B subunit to the ultimate electron acceptor NAD(+). The protein is Dihydroorotate dehydrogenase B (NAD(+)), electron transfer subunit of Geobacillus kaustophilus (strain HTA426).